Here is a 194-residue protein sequence, read N- to C-terminus: Ribonuclease HII (194 aa).

In terms of domain architecture, RNase H type-2 spans M1–R194. D6, E7, and D102 together coordinate a divalent metal cation.

This sequence belongs to the RNase HII family. It depends on Mn(2+) as a cofactor. The cofactor is Mg(2+).

It localises to the cytoplasm. It carries out the reaction Endonucleolytic cleavage to 5'-phosphomonoester.. Endonuclease that specifically degrades the RNA of RNA-DNA hybrids. The chain is Ribonuclease HII from Synechococcus sp. (strain WH7803).